A 654-amino-acid polypeptide reads, in one-letter code: MTQITEKELKKKYLDLLSQNFDTPEKLATEIINLESILELPKGTEHFVSDLHGEYEAFQHVLRNGSGNVRAKINDIFKERLSTKELNDLTALVYYPEDKLKLIKSDFQSCGQLNVWYITTIEHLIELIKYCSSKYTRSKLRKALPKQYVYIIEELLYKSNEYQNKKSYYETLVNQVIELKQADDLIIGLAYSVQRLVVDHLHVVGDIYDRGPQPDKIMDTLINYHSLDIQWGNHDVLWVGAYAGSKVCLANLLRICARYDNLDIIEDAYGINLRPLLTLAEKYYDADNPAFKPKKRPDKHERLTQREESQITKIHQAIAMIQFKLEIPIIKRRPNFEMEERLVLEKVNYDTNEITVYGNTYPLKDTCFQTVNRDNPAELLPEEEEVMNKLLLSFQQSEKLRRHMSFLMRKGSLYLPYNGNLLIHGCIPVDENGEMESFEIDGHTYSGQELLDVFEYHVRKSFDEKENTDDLSTDLVWYLWTGKYSSLFGKRAMTTFERYFIADKASHKEEKNPYYHLREDVNMVRKMLSDFGLNADEGRIINGHTPVKEINGEDPIKADGKMLVIDGGFSKAYQSTTGIAGYTLLYNSFGMQLVAHQQFNAKEKILSEGIDELSIKRVVDKELQRKKIRDTNIGKDLQAQIDILKMLMHDRYLD.

The interval 288 to 307 is disordered; it reads NPAFKPKKRPDKHERLTQRE. The segment covering 298–307 has biased composition (basic and acidic residues); the sequence is DKHERLTQRE.

The protein belongs to the FBPase class 3 family. Requires Mn(2+) as cofactor.

It carries out the reaction beta-D-fructose 1,6-bisphosphate + H2O = beta-D-fructose 6-phosphate + phosphate. It participates in carbohydrate biosynthesis; gluconeogenesis. The sequence is that of Fructose-1,6-bisphosphatase class 3 from Staphylococcus aureus (strain MSSA476).